The chain runs to 376 residues: Glutamate 5-kinase (376 aa).

ATP is bound at residue lysine 15. Positions 56, 143, and 155 each coordinate substrate. Residue 175 to 176 participates in ATP binding; the sequence is SD. In terms of domain architecture, PUA spans 281–358; sequence KGTLTIDAGA…PDVMMILGIT (78 aa).

The protein belongs to the glutamate 5-kinase family.

It localises to the cytoplasm. It carries out the reaction L-glutamate + ATP = L-glutamyl 5-phosphate + ADP. It participates in amino-acid biosynthesis; L-proline biosynthesis; L-glutamate 5-semialdehyde from L-glutamate: step 1/2. Catalyzes the transfer of a phosphate group to glutamate to form L-glutamate 5-phosphate. The chain is Glutamate 5-kinase from Rhodopseudomonas palustris (strain TIE-1).